The sequence spans 489 residues: Inositol-pentakisphosphate 2-kinase (489 aa).

The EXKPK motif signature appears at 136-140; it reads EIKPK.

The protein belongs to the IPK1 type 2 family.

It localises to the cytoplasm. The protein resides in the nucleus. It catalyses the reaction 1D-myo-inositol 1,3,4,5,6-pentakisphosphate + ATP = 1D-myo-inositol hexakisphosphate + ADP + H(+). Its function is as follows. Phosphorylates Ins(1,3,4,5,6)P5 at position 2 to form Ins(1,2,3,4,5,6)P6 (InsP6 or phytate). InsP6 is involved in many processes such as mRNA export, non-homologous end-joining, endocytosis, ion channel regulation. It also protects cells from TNF-alpha-induced apoptosis. The sequence is that of Inositol-pentakisphosphate 2-kinase (Ippk) from Rattus norvegicus (Rat).